Here is a 212-residue protein sequence, read N- to C-terminus: Adenylate kinase (212 aa).

10–15 (GAGKGT) serves as a coordination point for ATP. The segment at 30–59 (AIGDIFRTIIKTSTSEAELINNYVKQGELI) is NMP. AMP-binding positions include Arg-36, 57-59 (ELI), 85-88 (GYPR), and Gln-92. An LID region spans residues 122 to 160 (GRYSCKNCGKIYNRYFLQPKTDNVCDVCGSSTFDYRKDD). Arg-123 lines the ATP pocket. 2 residues coordinate Zn(2+): Cys-126 and Cys-129. Residue 132-133 (IY) coordinates ATP. The Zn(2+) site is built by Cys-146 and Cys-149. AMP-binding residues include Arg-157 and Arg-168. Position 196 (Lys-196) interacts with ATP.

It belongs to the adenylate kinase family. In terms of assembly, monomer.

The protein resides in the cytoplasm. The catalysed reaction is AMP + ATP = 2 ADP. The protein operates within purine metabolism; AMP biosynthesis via salvage pathway; AMP from ADP: step 1/1. Catalyzes the reversible transfer of the terminal phosphate group between ATP and AMP. Plays an important role in cellular energy homeostasis and in adenine nucleotide metabolism. This chain is Adenylate kinase, found in Rickettsia africae (strain ESF-5).